The chain runs to 215 residues: uncharacterized protein (215 aa).

The disordered stretch occupies residues 120–147; sequence HRAPQGTSSYQEGRRAHEATSAESDDDN.

This is an uncharacterized protein from Homo sapiens (Human).